The sequence spans 2486 residues: Nonribosomal peptide synthetase nanA (2486 aa).

An adenylation 1 region spans residues 231-637; it reads FSARQPLSPA…GRRGTQVKLR (407 aa). Positions 786–860 constitute a Carrier 1 domain; that stretch reads TDIELKVHAL…DLARSAKETS (75 aa). O-(pantetheine 4'-phosphoryl)serine is present on Ser820. A condensation 1 region spans residues 902–1314; it reads EDAYPCTPLQ…LKSVPRVSSQ (413 aa). Residues 1339-1735 form an adenylation 2 region; that stretch reads RAQARKTPLA…GRIGDQMKIR (397 aa). Carrier domains follow at residues 1872–1948 and 2404–2480; these read PPST…SSAS and SSSE…QTQA. An O-(pantetheine 4'-phosphoryl)serine mark is found at Ser1909 and Ser2441. A condensation 2 region spans residues 2404-2480; it reads SSSETIVEPL…KLARLLQTQA (77 aa).

Belongs to the NRP synthetase family.

The protein operates within secondary metabolite biosynthesis. Functionally, nonribosomal peptide synthetase; part of the gene cluster that mediates the biosynthesis of the benzazepine alkaloid nanangelenin A which contains an unprecedented 3,4-dihydro-1-benzazepine-2,5-dione-N-prenyl-N-acetoxy-anthranilamide scaffold. The first step of nanangelenin biosynthesis is catalyzed by the indoleamine 2,3-dioxygenase nanC which produces N-formyl-kynurenine through the catabolism of tryptophan. The two-module NRPS nanA then utilizes anthranilate (Ant) and L-kynurenine (L-Kyn) to assemble the dipeptide product nanangelenin B. The first adenylation domain of nanA (A1) loads anthranilate onto the T1 domain, while A2 loads kynurenine, generated through spontaneous nonenzymatic deformylation of the nanC-supplied N-formyl-kynurenine. The peptide bond formation between the tethered amino acids is catalyzed by the first condensation domain (C1) between anthranilate's carbonyl carbon and kynurenine's aliphatic primary amine. The second C domain (C2) catalyzes the final cyclization event between the aromatic amine of kynurenine and the tethered carbonyl carbon, yielding nanangelenin B. The terminal T3 domain enhances the catalytic efficiency of C2, suggesting the T2-tethered Ant-L-Kyn is transferred to T3 prior to cyclization by C2. Once released from nanA, nanangelenin B is then prenylated by the prenyltransferase nanD to form nanangelenin C. Nanangelenin C is then N-hydroxylated by the FAD-dependent monooxygenase nanF and further acetylated by the acetyltransferase nanB to yield nanangelenin F. Finally, the N-methyltransferase nanE methylates the amide nitrogen of 1-benzazepine to convert nanangelenin F into nanangelenin A. NanE is also able to methylate most of the intermediates of the pathway such as nanangelenin B and nanangelenin C to produce nanangelenin D and nanangelenin E, respectively. This chain is Nonribosomal peptide synthetase nanA, found in Aspergillus nanangensis.